We begin with the raw amino-acid sequence, 229 residues long: MDLLQSLAVFFVLLLPGTEVTGTLKSTLDPSLKIYKKMFEVKRREQLLALKNLAQLNDIHQQYKILDVMLKGLFKVLEDSRTVLIAADVLPDGPLPQDEKLKDAFSHVVENTAFFGDVVLRFPKIVHHYFDHNSNWNLLIRWGISFCNQTGVFDQGPHSPVLSLMAQELGITEKDSDFQNPFTIDRTEFIPSTDPFQKALREEEKRRKKEEKRKEIRKGPRISRSQSEL.

The signal sequence occupies residues 1–22; sequence MDLLQSLAVFFVLLLPGTEVTG. N-linked (GlcNAc...) asparagine glycosylation occurs at Asn-148. The tract at residues 191–229 is disordered; that stretch reads PSTDPFQKALREEEKRRKKEEKRKEIRKGPRISRSQSEL. Positions 196 to 218 form a coiled coil; it reads FQKALREEEKRRKKEEKRKEIRK. The short motif at 226–229 is the Prevents secretion from ER element; it reads QSEL.

Belongs to the CCDC134 family. Interacts with TADA2A. Associates with the PCAF complex via TADA2A binding. Post-translationally, O-glycosylated, with additional sialic acid modifications.

It localises to the endoplasmic reticulum lumen. It is found in the secreted. The protein localises to the cytoplasm. Its subcellular location is the nucleus. Its function is as follows. Molecular adapter required to prevent protein hyperglycosylation of HSP90B1: during translation, associates with nascent HSP90B1 and the STT3A catalytic component of the OST-A complex and tethers them to a specialized translocon that forms a microenvironment for HSP90B1 folding. In the CCDC134-containing translocon, STT3A associates with the SRT pseudosubstrate motif of HSP90B1, preventing access to facultative glycosylation sites until folding is completed, preventing hyperglycosylation and subsequent degradation of HSP90B1. In extracellular secreted form, promotes proliferation and activation of CD8(+) T-cells, suggesting a cytokine-like function. May inhibit ERK and JNK signaling activity. May suppress cell migration and invasion activity, via its effects on ERK and JNK signaling. May also localize in the nucleus: enhances stability of the PCAF histone acetyltransferase (HAT) complex member TADA2A and thus promotes PCAF-mediated histone acetyltransferase activity. Has a critical role in the regulation of osteogenesis and bone development. This chain is Coiled-coil domain-containing protein 134 (Ccdc134), found in Rattus norvegicus (Rat).